We begin with the raw amino-acid sequence, 68 residues long: DNA-directed RNA polymerase subunit omega (68 aa).

The protein belongs to the RNA polymerase subunit omega family. The RNAP catalytic core consists of 2 alpha, 1 beta, 1 beta' and 1 omega subunit. When a sigma factor is associated with the core the holoenzyme is formed, which can initiate transcription.

It catalyses the reaction RNA(n) + a ribonucleoside 5'-triphosphate = RNA(n+1) + diphosphate. Its function is as follows. Promotes RNA polymerase assembly. Latches the N- and C-terminal regions of the beta' subunit thereby facilitating its interaction with the beta and alpha subunits. This chain is DNA-directed RNA polymerase subunit omega, found in Listeria monocytogenes serotype 4b (strain CLIP80459).